Here is a 179-residue protein sequence, read N- to C-terminus: UPF0398 protein Bsph_0756 (179 aa).

It belongs to the UPF0398 family.

In Lysinibacillus sphaericus (strain C3-41), this protein is UPF0398 protein Bsph_0756.